We begin with the raw amino-acid sequence, 242 residues long: uncharacterized protein (242 aa).

Over residues 1–11 the composition is skewed to low complexity; it reads MNFEAASAPSQ. Residues 1 to 45 are disordered; that stretch reads MNFEAASAPSQQPSPTPAPKTEEPKENGGSEQQADQPENSKKDDV.

The protein to U.parvum UU171.

This is an uncharacterized protein from Ureaplasma parvum serovar 3 (strain ATCC 700970).